The following is a 355-amino-acid chain: Plasmodial-specific protein LAV1-2 (355 aa).

EF-hand domains lie at 151–186 (EDTN…YADT) and 217–252 (NDLA…LGFD). 20 residues coordinate Ca(2+): D230, N232, N234, T236, E241, D265, D267, S269, D271, E276, D295, D297, S299, Q301, E306, D332, D334, S336, S338, and E343. EF-hand domains follow at residues 282–317 (LCLL…AHIP) and 319–354 (SARK…MFHD).

The chain is Plasmodial-specific protein LAV1-2 from Physarum polycephalum (Slime mold).